The sequence spans 248 residues: Undecaprenyl-diphosphatase (248 aa).

The next 8 membrane-spanning stretches (helical) occupy residues 4 to 24 (IVLG…SGHL), 40 to 60 (FAFL…KEIV), 74 to 94 (YSLV…GFLF), 101 to 121 (SFSN…SLFV), 134 to 154 (ISYI…FPGI), 174 to 194 (ALKY…ILET), 201 to 221 (SYIL…LLIL), and 228 to 248 (KKLK…FFVG).

This sequence belongs to the UppP family.

Its subcellular location is the cell inner membrane. The catalysed reaction is di-trans,octa-cis-undecaprenyl diphosphate + H2O = di-trans,octa-cis-undecaprenyl phosphate + phosphate + H(+). In terms of biological role, catalyzes the dephosphorylation of undecaprenyl diphosphate (UPP). Confers resistance to bacitracin. The chain is Undecaprenyl-diphosphatase from Thermosipho africanus (strain TCF52B).